Consider the following 499-residue polypeptide: Proline--tRNA ligase (499 aa).

It belongs to the class-II aminoacyl-tRNA synthetase family. ProS type 3 subfamily. As to quaternary structure, homodimer.

Its subcellular location is the cytoplasm. It carries out the reaction tRNA(Pro) + L-proline + ATP = L-prolyl-tRNA(Pro) + AMP + diphosphate. In terms of biological role, catalyzes the attachment of proline to tRNA(Pro) in a two-step reaction: proline is first activated by ATP to form Pro-AMP and then transferred to the acceptor end of tRNA(Pro). The protein is Proline--tRNA ligase of Bdellovibrio bacteriovorus (strain ATCC 15356 / DSM 50701 / NCIMB 9529 / HD100).